Here is a 104-residue protein sequence, read N- to C-terminus: Gallinacin-11 (104 aa).

The first 22 residues, 1–22 (MKLFSCLMALLLFLLQAVPGLG), serve as a signal peptide directing secretion. Disulfide bonds link cysteine 30-cysteine 60, cysteine 37-cysteine 53, and cysteine 43-cysteine 61.

This sequence belongs to the beta-defensin family. Detected in outer membrane of the vitelline layer of the egg (at protein level). Expressed in the liver, gall bladder, kidney, testis, ovary and male and female reproductive tracts. Expressed in the ovarian stroma, but not in the ovarian follicles. No expression is detected in bone marrow.

It localises to the secreted. The protein resides in the cytoplasmic granule. In terms of biological role, has bactericidal activity. This chain is Gallinacin-11 (GAL11), found in Gallus gallus (Chicken).